Consider the following 349-residue polypeptide: Twinfilin-2-A (349 aa).

ADF-H domains are found at residues 4-139 and 177-313; these read QTGI…KHVS and GLSF…DEVH. The segment at 321 to 349 is disordered; it reads QAFAKPKGPAGKRGQKRLIKGPGENGEDS.

This sequence belongs to the actin-binding proteins ADF family. Twinfilin subfamily. Interacts with G-actin; ADP-actin form and capping protein (CP).

The protein resides in the cytoplasm. It is found in the cytoskeleton. The protein localises to the perinuclear region. Actin-binding protein involved in motile and morphological processes. Inhibits actin polymerization, likely by sequestering G-actin. This chain is Twinfilin-2-A (twf2-a), found in Xenopus laevis (African clawed frog).